Reading from the N-terminus, the 376-residue chain is MKFELDTTDGRARRGRLVFERGVVETPAFMPVGTYGTVKGMTPEEVQDTGAQIILGNTFHLWLRPGQEIMKLHGDLHDFMQWKGPILTDSGGFQVFSLGDIRKITEKGVHFRNPINGDAIFLDPEKSMEIQYDLGSDIVMIFDECTPYPADWDYAKRSMEMSLRWAQRSRDRFDSLGNKNALFGIIQGSVYEDLRDVSVKGLVDIGFDGYAVGGLAVGEPKEDMHRILEHVCPQLPQDKPRYLMGVGKPQDLVEGVRRGVDMFDCVMPTRNARNGHLFVSDGVVKIRNAKYKDDISPLDAECDCYTCRNYSRAYLYHLDRCNEILGARLNTIHNLRYYQRLMAGLRQAIEEGKLEHFVSEFYQRTGAAVPPITSDN.

The active-site Proton acceptor is Asp89. Residues 89-93 (DSGGF), Asp143, Gln187, and Gly214 each bind substrate. The RNA binding stretch occupies residues 245 to 251 (GVGKPQD). Catalysis depends on Asp264, which acts as the Nucleophile. The interval 269 to 273 (TRNAR) is RNA binding; important for wobble base 34 recognition. The Zn(2+) site is built by Cys302, Cys304, Cys307, and His333.

This sequence belongs to the queuine tRNA-ribosyltransferase family. In terms of assembly, homodimer. Within each dimer, one monomer is responsible for RNA recognition and catalysis, while the other monomer binds to the replacement base PreQ1. The cofactor is Zn(2+).

It carries out the reaction 7-aminomethyl-7-carbaguanine + guanosine(34) in tRNA = 7-aminomethyl-7-carbaguanosine(34) in tRNA + guanine. It functions in the pathway tRNA modification; tRNA-queuosine biosynthesis. Functionally, catalyzes the base-exchange of a guanine (G) residue with the queuine precursor 7-aminomethyl-7-deazaguanine (PreQ1) at position 34 (anticodon wobble position) in tRNAs with GU(N) anticodons (tRNA-Asp, -Asn, -His and -Tyr). Catalysis occurs through a double-displacement mechanism. The nucleophile active site attacks the C1' of nucleotide 34 to detach the guanine base from the RNA, forming a covalent enzyme-RNA intermediate. The proton acceptor active site deprotonates the incoming PreQ1, allowing a nucleophilic attack on the C1' of the ribose to form the product. After dissociation, two additional enzymatic reactions on the tRNA convert PreQ1 to queuine (Q), resulting in the hypermodified nucleoside queuosine (7-(((4,5-cis-dihydroxy-2-cyclopenten-1-yl)amino)methyl)-7-deazaguanosine). This is Queuine tRNA-ribosyltransferase from Erwinia tasmaniensis (strain DSM 17950 / CFBP 7177 / CIP 109463 / NCPPB 4357 / Et1/99).